We begin with the raw amino-acid sequence, 173 residues long: Peptide deformylase (173 aa).

Fe cation contacts are provided by cysteine 98 and histidine 140. Residue glutamate 141 is part of the active site. Residue histidine 144 participates in Fe cation binding.

This sequence belongs to the polypeptide deformylase family. Requires Fe(2+) as cofactor.

It catalyses the reaction N-terminal N-formyl-L-methionyl-[peptide] + H2O = N-terminal L-methionyl-[peptide] + formate. Removes the formyl group from the N-terminal Met of newly synthesized proteins. Requires at least a dipeptide for an efficient rate of reaction. N-terminal L-methionine is a prerequisite for activity but the enzyme has broad specificity at other positions. This chain is Peptide deformylase, found in Caulobacter sp. (strain K31).